A 267-amino-acid polypeptide reads, in one-letter code: Undecaprenyl-diphosphatase (267 aa).

The next 7 helical transmembrane spans lie at 1 to 21, 40 to 60, 85 to 105, 112 to 132, 189 to 209, 219 to 239, and 245 to 265; these read MSLF…FLPI, GQAI…LYFW, LAFL…FLEV, LRSI…LYWA, AMLM…AEVI, DGAI…TLMF, and VSFT…LVIA.

It belongs to the UppP family.

Its subcellular location is the cell inner membrane. The catalysed reaction is di-trans,octa-cis-undecaprenyl diphosphate + H2O = di-trans,octa-cis-undecaprenyl phosphate + phosphate + H(+). Its function is as follows. Catalyzes the dephosphorylation of undecaprenyl diphosphate (UPP). Confers resistance to bacitracin. This chain is Undecaprenyl-diphosphatase, found in Jannaschia sp. (strain CCS1).